The following is a 321-amino-acid chain: 4-dihydromethyl-trisporate dehydrogenase (321 aa).

The active-site Proton donor is the tyrosine 51. Residue histidine 113 participates in substrate binding.

It belongs to the aldo/keto reductase family.

The protein operates within pheromone biosynthesis; trisporate biosynthesis. Functionally, catalyzes the NADP-dependent oxidation of (+) mating-type specific precursor 4-dihydromethyl-trisporate to methyl-trisporate. This chain is 4-dihydromethyl-trisporate dehydrogenase (tdh), found in Mucor mucedo (Common pinmould).